Reading from the N-terminus, the 238-residue chain is Single-stranded DNA-binding protein WHY2, mitochondrial (238 aa).

Residues M1–F29 constitute a mitochondrion transit peptide. Positions K62–L67 are required for ssDNA binding.

It belongs to the Whirly family. As to quaternary structure, homotetramer.

It localises to the mitochondrion. In terms of biological role, single-stranded DNA-binding protein that associates with mitochondrial DNA and may play a role in the regulation of the gene expression machinery. Also seems to be required to prevent break-induced DNA rearrangements in the mitochondrial genome. Can bind to melt double-stranded DNA in vivo. The protein is Single-stranded DNA-binding protein WHY2, mitochondrial (WHY2) of Arabidopsis thaliana (Mouse-ear cress).